The sequence spans 418 residues: Galactooligosaccharides transport system permease protein GanP (418 aa).

Helical transmembrane passes span I25–L45, V65–Y85, L129–T149, V191–I211, I226–F246, L279–L299, Y323–F343, G357–L379, and L388–F408. An ABC transmembrane type-1 domain is found at L187–Q407.

Belongs to the binding-protein-dependent transport system permease family. In terms of assembly, the complex is composed of two ATP-binding proteins (MsmX), two transmembrane proteins (GanP and GanQ) and a solute-binding protein (GanS).

It is found in the cell membrane. In terms of biological role, involved in galactan degradation. Part of the ABC transporter complex GanPQS involved in the uptake of galactooligosaccharides. Responsible for the translocation of the substrate across the membrane. This is Galactooligosaccharides transport system permease protein GanP (ganP) from Bacillus subtilis (strain 168).